We begin with the raw amino-acid sequence, 1021 residues long: SWI/SNF-related matrix-associated actin-dependent regulator of chromatin subfamily A containing DEAD/H box 1 (1021 aa).

Met-1 carries the N-acetylmethionine modification. Disordered stretches follow at residues 1–82 (MNLF…SLSC) and 124–151 (SEPSEDEESHDLPSVTRRNDSSELEDLS). Residues 7–19 (DRFRFEKRSKIEE) show a composition bias toward basic and acidic residues. A compositionally biased stretch (low complexity) spans 22–39 (EAAPQPSQARPSSPISLS). A Phosphothreonine modification is found at Thr-54. A Phosphoserine modification is found at Ser-57. Residue Lys-77 forms a Glycyl lysine isopeptide (Lys-Gly) (interchain with G-Cter in SUMO2) linkage. Phosphoserine occurs at positions 79, 124, 127, 132, 144, 145, and 151. The CUE 1 domain maps to 156–198 (LKDAKLQTLKELFPQRSDSDLLKLIESTSTMDGAIAAALLMFG). The tract at residues 201 to 246 (GGGPRKRKLSSSSEEDDVNDDQSVKQPRGDRGEESNESAEASSNWE) is disordered. Ser-210, Ser-213, Ser-235, and Ser-238 each carry phosphoserine. Residues 247–290 (KQESIVLKLQKEFPNFDKQELREVLKEHEWMYTEALESLKVFAE) form the CUE 2 domain. Residue Ser-298 is modified to Phosphoserine. Positions 329-366 (VKPQNGFNKKRKKNVFNPKKAVEDSEYDSGSDAGSSLD) are disordered. Residues Lys-330 and Lys-466 each participate in a glycyl lysine isopeptide (Lys-Gly) (interchain with G-Cter in SUMO2) cross-link. The region spanning 504–672 (ALVHKHGLNG…MSLLNFVMPH (169 aa)) is the Helicase ATP-binding domain. Residue 516–524 (ADEMGLGKT) coordinates ATP. Residues 623–626 (DEGH) carry the DEGH box motif. A Nuclear localization signal motif is present at residues 716–733 (RRVKEEVLKLLPPKKDRI). Lys-719 participates in a covalent cross-link: Glycyl lysine isopeptide (Lys-Gly) (interchain with G-Cter in SUMO2). Positions 853–1005 (ALGCILSELK…MTTVDEADEG (153 aa)) constitute a Helicase C-terminal domain. 892-899 (YLRLDGKT) contributes to the ATP binding site. Lys-991 is covalently cross-linked (Glycyl lysine isopeptide (Lys-Gly) (interchain with G-Cter in SUMO2)). The short motif at 1000 to 1003 (DEAD) is the DEAD box element.

This sequence belongs to the SNF2/RAD54 helicase family. Binds to DNA preferentially in the vicinity of transcriptional start sites. Interacts with MSH2 and TRIM28. Part of a complex composed of TRIM28, HDAC1, HDAC2 and EHMT2. Interacts with PCNA.

It localises to the nucleus. Its subcellular location is the chromosome. The enzyme catalyses ATP + H2O = ADP + phosphate + H(+). In terms of biological role, DNA helicase that possesses intrinsic ATP-dependent nucleosome-remodeling activity and is both required for DNA repair and heterochromatin organization. Promotes DNA end resection of double-strand breaks (DSBs) following DNA damage: probably acts by weakening histone DNA interactions in nucleosomes flanking DSBs. Required for the restoration of heterochromatin organization after replication. Acts at replication sites to facilitate the maintenance of heterochromatin by directing H3 and H4 histones deacetylation, H3 'Lys-9' trimethylation (H3K9me3) and restoration of silencing. This Mus musculus (Mouse) protein is SWI/SNF-related matrix-associated actin-dependent regulator of chromatin subfamily A containing DEAD/H box 1 (Smarcad1).